Reading from the N-terminus, the 140-residue chain is 3-hydroxyacyl-[acyl-carrier-protein] dehydratase FabZ (140 aa).

Histidine 48 is a catalytic residue.

This sequence belongs to the thioester dehydratase family. FabZ subfamily.

It is found in the cytoplasm. It catalyses the reaction a (3R)-hydroxyacyl-[ACP] = a (2E)-enoyl-[ACP] + H2O. Its function is as follows. Involved in unsaturated fatty acids biosynthesis. Catalyzes the dehydration of short chain beta-hydroxyacyl-ACPs and long chain saturated and unsaturated beta-hydroxyacyl-ACPs. The chain is 3-hydroxyacyl-[acyl-carrier-protein] dehydratase FabZ from Oceanobacillus iheyensis (strain DSM 14371 / CIP 107618 / JCM 11309 / KCTC 3954 / HTE831).